The sequence spans 126 residues: Hydrogenase maturation factor HypA (126 aa).

Residue His2 participates in Ni(2+) binding. Zn(2+) is bound by residues Cys78, Cys81, Cys97, and Cys100.

Belongs to the HypA/HybF family.

Functionally, involved in the maturation of [NiFe] hydrogenases. Required for nickel insertion into the metal center of the hydrogenase. In Methanococcus maripaludis (strain DSM 14266 / JCM 13030 / NBRC 101832 / S2 / LL), this protein is Hydrogenase maturation factor HypA.